The chain runs to 373 residues: Flagellar P-ring protein 1 (373 aa).

Residues 1 to 24 (MRGISRLYWSLVLICFAFAPIVEA) form the signal peptide.

This sequence belongs to the FlgI family. In terms of assembly, the basal body constitutes a major portion of the flagellar organelle and consists of four rings (L,P,S, and M) mounted on a central rod.

The protein resides in the periplasm. The protein localises to the bacterial flagellum basal body. Functionally, assembles around the rod to form the L-ring and probably protects the motor/basal body from shearing forces during rotation. This chain is Flagellar P-ring protein 1, found in Hahella chejuensis (strain KCTC 2396).